The sequence spans 1040 residues: Multidrug resistance protein MdtB (1040 aa).

A run of 12 helical transmembrane segments spans residues 16 to 36 (FIMR…AGII), 342 to 362 (DTQF…YVFL), 369 to 389 (IIPA…MVFL), 396 to 416 (LTLM…IVVI), 440 to 460 (IGFT…PLLF), 472 to 492 (FAVT…TLTP), 537 to 557 (WATL…WIVI), 869 to 889 (LIVA…ESFI), 890 to 910 (HPVT…LALM), 911 to 931 (LSGS…IGIV), 968 to 988 (ILMT…STGV), and 998 to 1018 (IGMV…TPVI).

Belongs to the resistance-nodulation-cell division (RND) (TC 2.A.6) family. MdtB subfamily. In terms of assembly, part of a tripartite efflux system composed of MdtA, MdtB and MdtC. MdtB forms a heteromultimer with MdtC.

It localises to the cell inner membrane. The polypeptide is Multidrug resistance protein MdtB (Enterobacter sp. (strain 638)).